The primary structure comprises 495 residues: Glycogen synthase (495 aa).

Lys24 serves as a coordination point for ADP-alpha-D-glucose.

This sequence belongs to the glycosyltransferase 1 family. Bacterial/plant glycogen synthase subfamily.

It carries out the reaction [(1-&gt;4)-alpha-D-glucosyl](n) + ADP-alpha-D-glucose = [(1-&gt;4)-alpha-D-glucosyl](n+1) + ADP + H(+). It participates in glycan biosynthesis; glycogen biosynthesis. In terms of biological role, synthesizes alpha-1,4-glucan chains using ADP-glucose. The protein is Glycogen synthase of Nitrosomonas europaea (strain ATCC 19718 / CIP 103999 / KCTC 2705 / NBRC 14298).